The chain runs to 436 residues: Tol-Pal system protein TolB (436 aa).

The first 28 residues, 1–28 (MEMLRRNFFRLLMVLVAGCGLIASPAKA), serve as a signal peptide directing secretion.

This sequence belongs to the TolB family. The Tol-Pal system is composed of five core proteins: the inner membrane proteins TolA, TolQ and TolR, the periplasmic protein TolB and the outer membrane protein Pal. They form a network linking the inner and outer membranes and the peptidoglycan layer.

It is found in the periplasm. In terms of biological role, part of the Tol-Pal system, which plays a role in outer membrane invagination during cell division and is important for maintaining outer membrane integrity. This Sinorhizobium medicae (strain WSM419) (Ensifer medicae) protein is Tol-Pal system protein TolB.